Here is a 118-residue protein sequence, read N- to C-terminus: MQWALAVLLAFLSPASQKSSNLEGRTKSVIRQTGSSAEITCDLAEGSTGYIHWYLHQEGKAPQRLLYYDSYTSSVVLESGISPGKYDTYGSTRKNLRMILRNLIENDSGVYYCATWDG.

Residues Met1–Gln17 form the signal peptide. The Ig-like domain occupies Lys18 to Gly118. Cys41 and Cys113 are oxidised to a cystine. Asn106 carries an N-linked (GlcNAc...) asparagine glycan.

In terms of assembly, gamma-delta TR is a heterodimer composed of a gamma and delta chain; disulfide-linked. The gamma-delta TR is associated with the transmembrane signaling CD3 coreceptor proteins following the stoichiometry: a single gamma-delta TR heterodimer associates with one CD3D-CD3E heterodimer, one CD3G-CD3E heterodimer and one CD247 homodimer forming a stable octameric structure. Upon activation, gamma-delta TR complex associates with FCER1G to initiate intracellular signaling.

The protein resides in the cell membrane. Functionally, v region of the variable domain of T cell receptor (TR) gamma chain that participates in the antigen recognition. Gamma-delta TRs recognize a variety of self and foreign non-peptide antigens frequently expressed at the epithelial boundaries between the host and external environment, including endogenous lipids presented by MH-like protein CD1D and phosphoantigens presented by butyrophilin-like molecule BTN3A1. Upon antigen recognition induces rapid, innate-like immune responses involved in pathogen clearance and tissue repair. Binding of gamma-delta TR complex to antigen triggers phosphorylation of immunoreceptor tyrosine-based activation motifs (ITAMs) in the CD3 chains by the LCK and FYN kinases, allowing the recruitment, phosphorylation, and activation of ZAP70 that facilitates phosphorylation of the scaffolding proteins LCP2 and LAT. This lead to the formation of a supramolecular signalosome that recruits the phospholipase PLCG1, resulting in calcium mobilization and ERK activation, ultimately leading to T cell expansion and differentiation into effector cells. Gamma-delta TRs are produced through somatic rearrangement of a limited repertoire of variable (V), diversity (D), and joining (J) genes. The potential diversity of gamma-delta TRs is conferred by the unique ability to rearrange (D) genes in tandem and to utilize all three reading frames. The combinatorial diversity is considerably increased by the sequence exonuclease trimming and random nucleotide (N) region additions which occur during the V-(D)-J rearrangements. The chain is T cell receptor gamma variable 4 from Homo sapiens (Human).